Reading from the N-terminus, the 224-residue chain is Adenylate kinase (224 aa).

An ATP-binding site is contributed by 10–15 (GSGKST). The NMP stretch occupies residues 30–59 (SSGDLIRREIERKSSLGREMEAYLSRGDLI). AMP-binding positions include S31, R36, 57 to 59 (DLI), 83 to 86 (GYPR), and Q90. An LID region spans residues 124–161 (GRRICPNCGAVYHVKYNPPKVPGICDVCGSELIQRADD). R125 is a binding site for ATP. 2 residues coordinate Zn(2+): C128 and C131. Residue 134–135 (VY) participates in ATP binding. Zn(2+) contacts are provided by C148 and C151. Residues R158 and R169 each contribute to the AMP site. G197 is a binding site for ATP.

This sequence belongs to the adenylate kinase family. Monomer.

It is found in the cytoplasm. The enzyme catalyses AMP + ATP = 2 ADP. The protein operates within purine metabolism; AMP biosynthesis via salvage pathway; AMP from ADP: step 1/1. Functionally, catalyzes the reversible transfer of the terminal phosphate group between ATP and AMP. Plays an important role in cellular energy homeostasis and in adenine nucleotide metabolism. The sequence is that of Adenylate kinase from Thermococcus kodakarensis (strain ATCC BAA-918 / JCM 12380 / KOD1) (Pyrococcus kodakaraensis (strain KOD1)).